We begin with the raw amino-acid sequence, 358 residues long: Vanillin synthase (358 aa).

An N-terminal signal peptide occupies residues 1 to 21 (MARLLLLLVGVLIACAAGARA). Residues 22-140 (GSEFLAEDNP…RGNHKLTSAI (119 aa)) constitute a propeptide, activation peptide. Asparagine 125 carries an N-linked (GlcNAc...) asparagine glycan. 2 disulfide bridges follow: cysteine 162/cysteine 205 and cysteine 196/cysteine 238. Cysteine 165 is an active-site residue. N-linked (GlcNAc...) asparagine glycosylation is present at asparagine 254. Cysteine 296 and cysteine 346 are oxidised to a cystine. Active-site residues include histidine 305 and asparagine 325.

Belongs to the peptidase C1 family.

It carries out the reaction (E)-ferulate + H2O = vanillin + acetate. The catalysed reaction is 4-O-beta-D-glucosyl-trans-ferulate + H2O = 4-O-beta-D-glucosyl-vanillin + acetate. The protein operates within aromatic compound metabolism; phenylpropanoid biosynthesis. Functionally, involved in the biosynthesis of vanillin and derivative natural products. Catalyzes the double carbon bond cleavage of ferulic acid to vanillin and of respective glucosides. The chain is Vanillin synthase from Glechoma hederacea (Ground-ivy).